The sequence spans 115 residues: Large ribosomal subunit protein bL19 (115 aa).

Belongs to the bacterial ribosomal protein bL19 family.

This protein is located at the 30S-50S ribosomal subunit interface and may play a role in the structure and function of the aminoacyl-tRNA binding site. The chain is Large ribosomal subunit protein bL19 from Oleidesulfovibrio alaskensis (strain ATCC BAA-1058 / DSM 17464 / G20) (Desulfovibrio alaskensis).